The sequence spans 156 residues: Small ribosomal subunit protein uS7 (156 aa).

The protein belongs to the universal ribosomal protein uS7 family. Part of the 30S ribosomal subunit. Contacts proteins S9 and S11.

One of the primary rRNA binding proteins, it binds directly to 16S rRNA where it nucleates assembly of the head domain of the 30S subunit. Is located at the subunit interface close to the decoding center, probably blocks exit of the E-site tRNA. The chain is Small ribosomal subunit protein uS7 from Desulfatibacillum aliphaticivorans.